Reading from the N-terminus, the 254-residue chain is Probable protein ABIL5 (254 aa).

Positions 1–26 (MEVAEAGVDGVAGRRQQEEASGAAPF) are disordered.

Belongs to the ABI family. As to quaternary structure, binds SCAR.

It is found in the cytoplasm. It localises to the cytoskeleton. Functionally, involved in regulation of actin and microtubule organization. Part of a WAVE complex that activates the Arp2/3 complex. The polypeptide is Probable protein ABIL5 (Oryza sativa subsp. japonica (Rice)).